Reading from the N-terminus, the 482-residue chain is UDP-N-acetylmuramate--L-alanine ligase (482 aa).

A disordered region spans residues 1–26 (MPQLPMTDSAPLPTPAPSSPAQPSAQ). Position 140 to 146 (140 to 146 (GTHGKTT)) interacts with ATP.

It belongs to the MurCDEF family.

The protein resides in the cytoplasm. The catalysed reaction is UDP-N-acetyl-alpha-D-muramate + L-alanine + ATP = UDP-N-acetyl-alpha-D-muramoyl-L-alanine + ADP + phosphate + H(+). The protein operates within cell wall biogenesis; peptidoglycan biosynthesis. In terms of biological role, cell wall formation. In Deinococcus radiodurans (strain ATCC 13939 / DSM 20539 / JCM 16871 / CCUG 27074 / LMG 4051 / NBRC 15346 / NCIMB 9279 / VKM B-1422 / R1), this protein is UDP-N-acetylmuramate--L-alanine ligase.